The sequence spans 202 residues: Small ribosomal subunit protein uS4 (202 aa).

The interval 17-42 (ELPGLSRKTPRRAYPPGQHGQARKKR) is disordered. Positions 90-152 (MRLDNTIFRL…DASRKLIETH (63 aa)) constitute an S4 RNA-binding domain.

This sequence belongs to the universal ribosomal protein uS4 family. In terms of assembly, part of the 30S ribosomal subunit. Contacts protein S5. The interaction surface between S4 and S5 is involved in control of translational fidelity.

One of the primary rRNA binding proteins, it binds directly to 16S rRNA where it nucleates assembly of the body of the 30S subunit. In terms of biological role, with S5 and S12 plays an important role in translational accuracy. The polypeptide is Small ribosomal subunit protein uS4 (Acaryochloris marina (strain MBIC 11017)).